The chain runs to 442 residues: Tyrosine-protein kinase transforming protein RYK (442 aa).

The 272-residue stretch at 45 to 316 (LSLGKVLGEG…QLKVHLEKLL (272 aa)) folds into the Protein kinase domain. Residues 51–59 (LGEGEFGSV) and Lys77 each bind ATP. Asp181 (proton acceptor) is an active-site residue. The residue at position 212 (Tyr212) is a Phosphotyrosine; by autocatalysis.

It belongs to the protein kinase superfamily. Tyr protein kinase family. AXL/UFO subfamily.

It is found in the host cell membrane. The catalysed reaction is L-tyrosyl-[protein] + ATP = O-phospho-L-tyrosyl-[protein] + ADP + H(+). This chain is Tyrosine-protein kinase transforming protein RYK (V-RYK), found in Avian retrovirus RPL30.